The primary structure comprises 482 residues: Cysteine--tRNA ligase (482 aa).

Cysteine 28 contributes to the Zn(2+) binding site. The short motif at 30 to 40 is the 'HIGH' region element; it reads PTVYNFLHVGN. Zn(2+) contacts are provided by cysteine 208, histidine 233, and glutamate 237. Positions 265-269 match the 'KMSKS' region motif; sequence KMSKS. Lysine 268 serves as a coordination point for ATP.

This sequence belongs to the class-I aminoacyl-tRNA synthetase family. As to quaternary structure, monomer. Zn(2+) is required as a cofactor.

The protein localises to the cytoplasm. The enzyme catalyses tRNA(Cys) + L-cysteine + ATP = L-cysteinyl-tRNA(Cys) + AMP + diphosphate. The protein is Cysteine--tRNA ligase of Bdellovibrio bacteriovorus (strain ATCC 15356 / DSM 50701 / NCIMB 9529 / HD100).